A 181-amino-acid polypeptide reads, in one-letter code: Crossover junction endodeoxyribonuclease RuvC (181 aa).

Catalysis depends on residues D8, E67, and D139. Mg(2+)-binding residues include D8, E67, and D139.

This sequence belongs to the RuvC family. As to quaternary structure, homodimer which binds Holliday junction (HJ) DNA. The HJ becomes 2-fold symmetrical on binding to RuvC with unstacked arms; it has a different conformation from HJ DNA in complex with RuvA. In the full resolvosome a probable DNA-RuvA(4)-RuvB(12)-RuvC(2) complex forms which resolves the HJ. Requires Mg(2+) as cofactor.

Its subcellular location is the cytoplasm. It carries out the reaction Endonucleolytic cleavage at a junction such as a reciprocal single-stranded crossover between two homologous DNA duplexes (Holliday junction).. Its function is as follows. The RuvA-RuvB-RuvC complex processes Holliday junction (HJ) DNA during genetic recombination and DNA repair. Endonuclease that resolves HJ intermediates. Cleaves cruciform DNA by making single-stranded nicks across the HJ at symmetrical positions within the homologous arms, yielding a 5'-phosphate and a 3'-hydroxyl group; requires a central core of homology in the junction. The consensus cleavage sequence is 5'-(A/T)TT(C/G)-3'. Cleavage occurs on the 3'-side of the TT dinucleotide at the point of strand exchange. HJ branch migration catalyzed by RuvA-RuvB allows RuvC to scan DNA until it finds its consensus sequence, where it cleaves and resolves the cruciform DNA. In Acinetobacter baylyi (strain ATCC 33305 / BD413 / ADP1), this protein is Crossover junction endodeoxyribonuclease RuvC.